The sequence spans 689 residues: Calcium-responsive transcription factor (689 aa).

2 disordered regions span residues 1-46 and 541-609; these read MEQR…PTIL and SPDG…SVPN. Residues 13–29 show a composition bias toward basic and acidic residues; it reads DGEKSEREAQGFEHRTC. Composition is skewed to polar residues over residues 541-559 and 578-601; these read SPDGSQALVSVDSHASSSP and LGQSQNPGTDTCLTQDNSTSSSTG.

In terms of tissue distribution, highly expressed in brain and testis.

Its subcellular location is the nucleus. Functionally, acts as a transcriptional activator that mediates the calcium- and neuron-selective induction of BDNF exon III transcription. Binds to the consensus calcium-response element CaRE1 5'-CTATTTCGAG-3' sequence. This chain is Calcium-responsive transcription factor (Carf), found in Mus musculus (Mouse).